The following is a 181-amino-acid chain: NADH-quinone oxidoreductase subunit B (181 aa).

Residues C45, C46, C111, and C140 each contribute to the [4Fe-4S] cluster site.

Belongs to the complex I 20 kDa subunit family. As to quaternary structure, NDH-1 is composed of 15 different subunits. Subunits NuoB, C, D, E, F, and G constitute the peripheral sector of the complex. The cofactor is [4Fe-4S] cluster.

It is found in the cell membrane. The catalysed reaction is a quinone + NADH + 5 H(+)(in) = a quinol + NAD(+) + 4 H(+)(out). Functionally, NDH-1 shuttles electrons from NADH, via FMN and iron-sulfur (Fe-S) centers, to quinones in the respiratory chain. The immediate electron acceptor for the enzyme in this species is believed to be a menaquinone. Couples the redox reaction to proton translocation (for every two electrons transferred, four hydrogen ions are translocated across the cytoplasmic membrane), and thus conserves the redox energy in a proton gradient. The polypeptide is NADH-quinone oxidoreductase subunit B (Deinococcus radiodurans (strain ATCC 13939 / DSM 20539 / JCM 16871 / CCUG 27074 / LMG 4051 / NBRC 15346 / NCIMB 9279 / VKM B-1422 / R1)).